Here is a 332-residue protein sequence, read N- to C-terminus: Eukaryotic translation initiation factor 3 subunit I (332 aa).

WD repeat units follow at residues 8 to 47, 48 to 87, 144 to 182, and 279 to 318; these read GHER…GTYH, GHQG…LLHT, DESK…LLSS, and GHFG…FDFM.

It belongs to the eIF-3 subunit I family. As to quaternary structure, component of the eukaryotic translation initiation factor 3 (eIF-3) complex.

The protein resides in the cytoplasm. Component of the eukaryotic translation initiation factor 3 (eIF-3) complex, which is involved in protein synthesis of a specialized repertoire of mRNAs and, together with other initiation factors, stimulates binding of mRNA and methionyl-tRNAi to the 40S ribosome. The eIF-3 complex specifically targets and initiates translation of a subset of mRNAs involved in cell proliferation. The polypeptide is Eukaryotic translation initiation factor 3 subunit I (Phaeosphaeria nodorum (strain SN15 / ATCC MYA-4574 / FGSC 10173) (Glume blotch fungus)).